The chain runs to 35 residues: Probable protein L3 (35 aa).

The sequence is that of Probable protein L3 from Odocoileus virginianus papillomavirus 1 (DPV).